Reading from the N-terminus, the 99-residue chain is Aspartyl/glutamyl-tRNA(Asn/Gln) amidotransferase subunit C (99 aa).

The protein belongs to the GatC family. As to quaternary structure, heterotrimer of A, B and C subunits.

The enzyme catalyses L-glutamyl-tRNA(Gln) + L-glutamine + ATP + H2O = L-glutaminyl-tRNA(Gln) + L-glutamate + ADP + phosphate + H(+). It carries out the reaction L-aspartyl-tRNA(Asn) + L-glutamine + ATP + H2O = L-asparaginyl-tRNA(Asn) + L-glutamate + ADP + phosphate + 2 H(+). In terms of biological role, allows the formation of correctly charged Asn-tRNA(Asn) or Gln-tRNA(Gln) through the transamidation of misacylated Asp-tRNA(Asn) or Glu-tRNA(Gln) in organisms which lack either or both of asparaginyl-tRNA or glutaminyl-tRNA synthetases. The reaction takes place in the presence of glutamine and ATP through an activated phospho-Asp-tRNA(Asn) or phospho-Glu-tRNA(Gln). The chain is Aspartyl/glutamyl-tRNA(Asn/Gln) amidotransferase subunit C from Variovorax paradoxus (strain S110).